A 117-amino-acid polypeptide reads, in one-letter code: Reprimo-like protein (117 aa).

A helical transmembrane segment spans residues 64 to 84; that stretch reads VAQIAVLCVLSLTVVFGVFFL. Phosphoserine is present on Ser-106.

Belongs to the reprimo family.

It is found in the membrane. The protein is Reprimo-like protein (Rprml) of Mus musculus (Mouse).